The chain runs to 79 residues: Conotoxin Vi6.9 (79 aa).

A signal peptide spans 1–22 (MKLTCMVIITVLFLTASQLITA). Residues 23–47 (DYSRDQRQYRAVRLGDEMRNFKGAR) constitute a propeptide that is removed on maturation. Disulfide bonds link C49–C62, C56–C67, and C61–C77. A 4-hydroxyproline mark is found at P60 and P63.

It belongs to the conotoxin O1 superfamily. As to expression, expressed by the venom duct.

It localises to the secreted. Ion channel inhibitor that inhibits the increase in intracellular calcium upon depolarization in DRG neurons. In vivo, both intraperitoneal and intracranial injections into mice induce hyperactivity. The protein is Conotoxin Vi6.9 of Conus virgo (Virgin cone).